A 552-amino-acid chain; its full sequence is Rhodopsin kinase GRK7 (552 aa).

The residue at position 36 (S36) is a Phosphoserine; by PKA. An RGS domain is found at 56–176 (FHSLCEQQPI…LASPFYDKFL (121 aa)). In terms of domain architecture, Protein kinase spans 191-454 (FEEFRVLGKG…SDDPRKHHFF (264 aa)). ATP is bound by residues 197 to 205 (LGKGGFGEV) and K220. D316 (proton acceptor) is an active-site residue. Positions 455–520 (KTINFPRLEA…GAVPIAWQEE (66 aa)) constitute an AGC-kinase C-terminal domain. At C549 the chain carries Cysteine methyl ester. C549 carries S-geranylgeranyl cysteine lipidation. A propeptide spans 550-552 (LLL) (removed in mature form).

This sequence belongs to the protein kinase superfamily. AGC Ser/Thr protein kinase family. GPRK subfamily. In terms of assembly, interacts (when prenylated) with PDE6D; this promotes release from membranes. Post-translationally, autophosphorylated in vitro at Ser-490. Phosphorylation at Ser-36 is regulated by light and activated by cAMP.

The protein localises to the membrane. The enzyme catalyses L-threonyl-[rhodopsin] + ATP = O-phospho-L-threonyl-[rhodopsin] + ADP + H(+). The catalysed reaction is L-seryl-[rhodopsin] + ATP = O-phospho-L-seryl-[rhodopsin] + ADP + H(+). With respect to regulation, inhibited by phosphorylation of Ser-36. In terms of biological role, retina-specific kinase involved in the shutoff of the photoresponse and adaptation to changing light conditions via cone opsin phosphorylation, including rhodopsin (RHO). The protein is Rhodopsin kinase GRK7 (GRK7) of Bos taurus (Bovine).